A 193-amino-acid polypeptide reads, in one-letter code: Dual-action ribosomal maturation protein DarP (193 aa).

Basic and acidic residues predominate over residues methionine 1–glutamate 10. Disordered stretches follow at residues methionine 1 to arginine 20 and glutamine 171 to glutamate 193. Over residues glycine 181–glutamate 193 the composition is skewed to acidic residues.

Belongs to the DarP family.

Its subcellular location is the cytoplasm. Member of a network of 50S ribosomal subunit biogenesis factors which assembles along the 30S-50S interface, preventing incorrect 23S rRNA structures from forming. Promotes peptidyl transferase center (PTC) maturation. The protein is Dual-action ribosomal maturation protein DarP of Xanthomonas oryzae pv. oryzae (strain MAFF 311018).